Reading from the N-terminus, the 201-residue chain is Regulator of G-protein signaling 1 (201 aa).

The region spanning 75 to 191 (SLEKLLVSEE…LKSEIFFRLA (117 aa)) is the RGS domain.

It is found in the cell membrane. The protein localises to the cytoplasm. Its subcellular location is the cytosol. Its function is as follows. Regulates G protein-coupled receptor signaling cascades, including signaling downstream of the N-formylpeptide chemoattractant receptors and leukotriene receptors. Inhibits B cell chemotaxis. Inhibits signal transduction by increasing the GTPase activity of G protein alpha subunits, thereby driving them into their inactive GDP-bound form. In Xenopus laevis (African clawed frog), this protein is Regulator of G-protein signaling 1 (rgs1).